We begin with the raw amino-acid sequence, 529 residues long: Glucose-6-phosphate isomerase (529 aa).

Glu-322 functions as the Proton donor in the catalytic mechanism. Catalysis depends on residues His-351 and Lys-455.

Belongs to the GPI family.

It is found in the cytoplasm. It carries out the reaction alpha-D-glucose 6-phosphate = beta-D-fructose 6-phosphate. Its pathway is carbohydrate biosynthesis; gluconeogenesis. It participates in carbohydrate degradation; glycolysis; D-glyceraldehyde 3-phosphate and glycerone phosphate from D-glucose: step 2/4. Its function is as follows. Catalyzes the reversible isomerization of glucose-6-phosphate to fructose-6-phosphate. The protein is Glucose-6-phosphate isomerase of Cyanothece sp. (strain PCC 7425 / ATCC 29141).